Consider the following 222-residue polypeptide: Phosphoenolpyruvate guanylyltransferase (222 aa).

The phosphoenolpyruvate site is built by threonine 147, glycine 163, and serine 166.

This sequence belongs to the CofC family.

It catalyses the reaction phosphoenolpyruvate + GTP + H(+) = enolpyruvoyl-2-diphospho-5'-guanosine + diphosphate. It participates in cofactor biosynthesis; coenzyme F420 biosynthesis. Its function is as follows. Guanylyltransferase that catalyzes the activation of phosphoenolpyruvate (PEP) as enolpyruvoyl-2-diphospho-5'-guanosine, via the condensation of PEP with GTP. It is involved in the biosynthesis of coenzyme F420, a hydride carrier cofactor. The protein is Phosphoenolpyruvate guanylyltransferase of Streptosporangium roseum (strain ATCC 12428 / DSM 43021 / JCM 3005 / KCTC 9067 / NCIMB 10171 / NRRL 2505 / NI 9100).